The primary structure comprises 283 residues: Putative ABC transporter ATP-binding protein MA_4342 (283 aa).

The ABC transporter domain occupies 3–238 (IILENVSFFY…KNVPLPPVTS (236 aa)). Position 40 to 47 (40 to 47 (GEKGAGKS)) interacts with ATP.

The protein belongs to the ABC transporter superfamily.

It is found in the cell membrane. Its function is as follows. Probably part of an ABC transporter complex. Responsible for energy coupling to the transport system. This Methanosarcina acetivorans (strain ATCC 35395 / DSM 2834 / JCM 12185 / C2A) protein is Putative ABC transporter ATP-binding protein MA_4342.